Consider the following 428-residue polypeptide: Histidine--tRNA ligase (428 aa).

The protein belongs to the class-II aminoacyl-tRNA synthetase family. In terms of assembly, homodimer.

It is found in the cytoplasm. It catalyses the reaction tRNA(His) + L-histidine + ATP = L-histidyl-tRNA(His) + AMP + diphosphate + H(+). The polypeptide is Histidine--tRNA ligase (Bordetella avium (strain 197N)).